A 201-amino-acid polypeptide reads, in one-letter code: Protein GrpE (201 aa).

The tract at residues 1-32 (MTDRDRQPEDTTAPTGEPVVSKPYIMPDDPEP) is disordered.

This sequence belongs to the GrpE family. As to quaternary structure, homodimer.

The protein resides in the cytoplasm. Participates actively in the response to hyperosmotic and heat shock by preventing the aggregation of stress-denatured proteins, in association with DnaK and GrpE. It is the nucleotide exchange factor for DnaK and may function as a thermosensor. Unfolded proteins bind initially to DnaJ; upon interaction with the DnaJ-bound protein, DnaK hydrolyzes its bound ATP, resulting in the formation of a stable complex. GrpE releases ADP from DnaK; ATP binding to DnaK triggers the release of the substrate protein, thus completing the reaction cycle. Several rounds of ATP-dependent interactions between DnaJ, DnaK and GrpE are required for fully efficient folding. In Bradyrhizobium diazoefficiens (strain JCM 10833 / BCRC 13528 / IAM 13628 / NBRC 14792 / USDA 110), this protein is Protein GrpE.